The following is a 344-amino-acid chain: L-erythro-3,5-diaminohexanoate dehydrogenase (344 aa).

This sequence belongs to the KDD family. Homodimer.

The enzyme catalyses (3S,5S)-3,5-diaminohexanoate + NAD(+) + H2O = (5S)-5-amino-3-oxohexanoate + NH4(+) + NADH + H(+). It functions in the pathway amino-acid degradation; L-lysine degradation via acetate pathway. Involved in the anaerobic fermentation of lysine. Catalyzes the oxidative deamination of L-erythro-3,5-diaminohexanoate (3,5-DAH) to 3-keto-5-aminohexanoate (KAH). The protein is L-erythro-3,5-diaminohexanoate dehydrogenase of Acetoanaerobium sticklandii (strain ATCC 12662 / DSM 519 / JCM 1433 / CCUG 9281 / NCIMB 10654 / HF) (Clostridium sticklandii).